We begin with the raw amino-acid sequence, 404 residues long: Queuine tRNA-ribosyltransferase catalytic subunit (404 aa).

D98 acts as the Proton acceptor in catalysis. Residues 98-102 (DSGGF), D152, Q195, and G222 contribute to the substrate site. Residues 253-259 (GVGYAED) form an RNA binding region. D272 serves as the catalytic Nucleophile. The tract at residues 277–281 (TRTAR) is RNA binding; important for wobble base 34 recognition. The Zn(2+) site is built by C310, C312, C315, and H347.

Belongs to the queuine tRNA-ribosyltransferase family. Heterodimer of a catalytic subunit and an accessory subunit. Requires Zn(2+) as cofactor.

Its subcellular location is the cytoplasm. The protein resides in the nucleus. The catalysed reaction is guanosine(34) in tRNA + queuine = queuosine(34) in tRNA + guanine. Its function is as follows. Catalytic subunit of the queuine tRNA-ribosyltransferase (TGT) that catalyzes the base-exchange of a guanine (G) residue with queuine (Q) at position 34 (anticodon wobble position) in tRNAs with GU(N) anticodons (tRNA-Asp, -Asn, -His and -Tyr), resulting in the hypermodified nucleoside queuosine (7-(((4,5-cis-dihydroxy-2-cyclopenten-1-yl)amino)methyl)-7-deazaguanosine). Catalysis occurs through a double-displacement mechanism. The nucleophile active site attacks the C1' of nucleotide 34 to detach the guanine base from the RNA, forming a covalent enzyme-RNA intermediate. The proton acceptor active site deprotonates the incoming queuine, allowing a nucleophilic attack on the C1' of the ribose to form the product. The sequence is that of Queuine tRNA-ribosyltransferase catalytic subunit from Schizosaccharomyces pombe (strain 972 / ATCC 24843) (Fission yeast).